Reading from the N-terminus, the 3259-residue chain is Striated muscle-specific serine/threonine-protein kinase (3259 aa).

Residues 1-30 are disordered; the sequence is MQKARGTRGEDAGTRAPPSPGVPPKRAKVG. At R33 the chain carries Omega-N-methylarginine. One can recognise an Ig-like 1 domain in the interval 45–126; sequence PVFLRPLKNA…GKASCEAVLT (82 aa). Position 141 is a phosphoserine (S141). Disordered regions lie at residues 155–185, 198–226, 278–716, and 816–880; these read RAFSTPTGGSDTLVGTSLDTPPTSVTGTSEE, EQEAGSGGGTRPLPGSPRQAQTTGAGPRH, PSGL…DDSY, and VRPG…KVSL. A compositionally biased stretch (polar residues) spans 158-185; that stretch reads STPTGGSDTLVGTSLDTPPTSVTGTSEE. A compositionally biased stretch (pro residues) spans 301–317; the sequence is PALPPPSKSALLPPPSP. Residues S368 and S375 each carry the phosphoserine modification. A Phosphothreonine modification is found at T379. Phosphoserine is present on residues S382 and S385. A compositionally biased stretch (basic and acidic residues) spans 404–422; that stretch reads ILDKLQFFEERRRSLERSD. At S423 the chain carries Phosphoserine. The residue at position 453 (T453) is a Phosphothreonine. A phosphoserine mark is found at S457, S463, S493, S511, S531, and S554. Basic and acidic residues predominate over residues 459-473; the sequence is EELRSPRGSVAERRR. The span at 510–522 shows a compositional bias: basic and acidic residues; the sequence is TSREELVRSHESL. 2 stretches are compositionally biased toward basic and acidic residues: residues 624-638 and 663-680; these read PESRTKAPSARKREP and EKNRAGPEAEKRLRRGPE. One can recognise an Ig-like 2 domain in the interval 727-817; sequence PVFEIPLQNM…ASCASSLAVR (91 aa). Positions 820–830 are enriched in polar residues; it reads ASTSPFSSPIT. 3 Ig-like domains span residues 874 to 963, 968 to 1056, and 1069 to 1157; these read PTFK…ARLE, PESR…DELT, and PLFT…AQLY. The cysteines at positions 994 and 1046 are disulfide-linked. Phosphoserine is present on residues S1133 and S1177. The segment at 1162-1185 is disordered; the sequence is RTAASGPSSKLEKMPSIPEEPEHG. An Ig-like 6 domain is found at 1193 to 1283; the sequence is PDFLRPLQDL…AACYAHLYVT (91 aa). In terms of domain architecture, Fibronectin type-III 1 spans 1290–1387; sequence PDGAPQVVAV…PSEPVQLLEH (98 aa). The segment covering 1367-1379 has biased composition (low complexity); that stretch reads SSGKSSSKPSAPS. Residues 1367–1386 form a disordered region; sequence SSGKSSSKPSAPSEPVQLLE. Residues 1490–1578 enclose the Ig-like 7 domain; the sequence is PRFESIMEDV…GEVSCKAELS (89 aa). The 254-residue stretch at 1606–1859 folds into the Protein kinase 1 domain; it reads YDIHQEIGRG…AEETLEHPWF (254 aa). ATP contacts are provided by residues 1612–1620 and K1635; that span reads IGRGAFSYL. The active-site Proton acceptor is D1724. Disordered regions lie at residues 1913–2244, 2336–2451, and 2463–2562; these read MPRR…QMPA, AKFK…SPVL, and RLSS…SQPN. A compositionally biased stretch (low complexity) spans 1918–1927; that stretch reads PPSGGLSSSS. Phosphoserine occurs at positions 1993, 2004, 2019, 2020, and 2042. Residues 2009–2019 show a composition bias toward basic and acidic residues; that stretch reads SPRRPELRRGS. The residue at position 2060 (R2060) is an Asymmetric dimethylarginine; alternate. The residue at position 2060 (R2060) is an Omega-N-methylarginine; alternate. Residues 2069–2081 are compositionally biased toward low complexity; it reads AQRLQALRQRLLR. 2 positions are modified to phosphoserine: S2114 and S2135. R2144 is subject to Omega-N-methylarginine. Positions 2168 to 2179 are enriched in polar residues; that stretch reads ESPSLSALSETQ. A compositionally biased stretch (pro residues) spans 2180 to 2189; the sequence is PPSPALPSAP. 2 positions are modified to phosphoserine: S2182 and S2207. Residues 2193-2207 are compositionally biased toward polar residues; the sequence is ITKSPEPSAATSRDS. Residues 2208–2218 are compositionally biased toward pro residues; that stretch reads PQPPAPQPVPE. Residues 2219 to 2229 show a composition bias toward basic and acidic residues; sequence KIPEPKPEPVR. Residues 2230-2244 are compositionally biased toward low complexity; it reads AAKPAQPPLALQMPA. Basic and acidic residues predominate over residues 2336–2345; that stretch reads AKFKRSRESP. Residues 2346 to 2355 are compositionally biased toward low complexity; the sequence is LSRGLRLLSR. Basic and acidic residues predominate over residues 2356 to 2372; that stretch reads SRSEERGPFRGAEDDGI. At S2376 the chain carries Phosphoserine. T2380 bears the Phosphothreonine mark. The segment covering 2384 to 2395 has biased composition (basic and acidic residues); that stretch reads LVRRPERSRSVQ. S2410, S2414, S2438, S2439, S2444, and S2448 each carry phosphoserine. A compositionally biased stretch (low complexity) spans 2463 to 2484; the sequence is RLSSRLQRSGSSEDSGGASGRS. Residues 2510-2520 show a composition bias toward polar residues; sequence QLASQTGATTP. A phosphoserine mark is found at S2521 and S2524. Low complexity predominate over residues 2521-2540; that stretch reads SAESLGSEASGTSGSSAPGE. Positions 2543–2554 are enriched in basic residues; sequence SRHRWGLSRLRK. Residue S2559 is modified to Phosphoserine. In terms of domain architecture, Ig-like 8 spans 2583–2673; sequence PPVFHIKLKD…GSITSSCTVA (91 aa). Cysteines 2605 and 2657 form a disulfide. The 95-residue stretch at 2680–2774 folds into the Fibronectin type-III 2 domain; sequence KLAPPEVPQT…KVFIRGTQDS (95 aa). Position 2771 is a phosphothreonine (T2771). Disordered regions lie at residues 2771 to 2829 and 2855 to 2957; these read TQDS…MSAN and TQQA…PQKP. S2774 is subject to Phosphoserine. Positions 2793–2810 are enriched in pro residues; the sequence is RAPPPDSPTSLVPTPPLA. Positions 2814–2828 are enriched in low complexity; sequence SQASTLSPSTSSMSA. Positions 2859–2965 constitute a Fibronectin type-III 3 domain; sequence EPSPPSILVT…KPYTFLEEKA (107 aa). The span at 2880 to 2907 shows a compositional bias: polar residues; it reads GTLTPTSSPQGVKPAPSSSSLYMVTSFV. Residues 2910-2924 are compositionally biased toward pro residues; that stretch reads PPDPQPPAPEPPPEP. Polar residues predominate over residues 2940 to 2950; the sequence is SSPTPESTTLR. S2941 is subject to Phosphoserine. The Protein kinase 2 domain maps to 2958-3210; it reads YTFLEEKARG…LQDCLAHPWL (253 aa). ATP is bound by residues 2964 to 2972 and K2987; that span reads KARGRFGVV. D3077 acts as the Proton acceptor in catalysis.

Belongs to the protein kinase superfamily. CAMK Ser/Thr protein kinase family. In terms of assembly, interacts with MTM1. In terms of processing, may be autophosphorylated. In terms of tissue distribution, isoform 2 is highly expressed in differentiated arterial smooth muscle cells (ASMC) in the medial layer of the aorta. Weakly detected in brain and testis and to a lesser extent in organs rich in striated muscle or visceral smooth muscle.

The protein localises to the nucleus. The catalysed reaction is L-seryl-[protein] + ATP = O-phospho-L-seryl-[protein] + ADP + H(+). It carries out the reaction L-threonyl-[protein] + ATP = O-phospho-L-threonyl-[protein] + ADP + H(+). Its function is as follows. Isoform 2 may have a role in regulating the growth and differentiation of arterial smooth muscle cells. The sequence is that of Striated muscle-specific serine/threonine-protein kinase (Speg) from Rattus norvegicus (Rat).